A 457-amino-acid chain; its full sequence is Argininosuccinate lyase (457 aa).

The protein belongs to the lyase 1 family. Argininosuccinate lyase subfamily.

The protein localises to the cytoplasm. The catalysed reaction is 2-(N(omega)-L-arginino)succinate = fumarate + L-arginine. It participates in amino-acid biosynthesis; L-arginine biosynthesis; L-arginine from L-ornithine and carbamoyl phosphate: step 3/3. The polypeptide is Argininosuccinate lyase (Citrobacter koseri (strain ATCC BAA-895 / CDC 4225-83 / SGSC4696)).